Reading from the N-terminus, the 180-residue chain is Chromosome-anchoring protein RacA (180 aa).

Positions 5–25 form a DNA-binding region, H-T-H motif; sequence TPFIAKKLGVSPKAVVRIAQQ. Positions 90 to 150 form a coiled coil; that stretch reads HDFEQLAAQL…KLEAGLKKEE (61 aa).

It belongs to the RacA family.

Its subcellular location is the cytoplasm. Required for the formation of axial filaments and for anchoring the origin regions at the cell poles in sporulating cells, thus ensuring proper chromosome segregation in the prespore. Binds in a dispersed manner throughout the chromosome but preferentially to sites clustered in the origin portion of the chromosome, causing condensation of the chromosome and its remodeling into an elongated, anchored structure. The polypeptide is Chromosome-anchoring protein RacA (Bacillus anthracis (strain A0248)).